The primary structure comprises 160 residues: MEHTIAVIPGSFDPITYGHLDIIERSTDRFDEIHVCVLKNSKKEGTFSLEERMDLIEQSVKHLPNVKVHQFSGLLVDYCEQVGAKTIIRGLRAVSDFEYELRLTSMNKKLNNEIETLYMMSSTNYSFISSSIVKEVAAYRADISEFVPPYVEKALKKKFK.

Substrate is bound at residue Ser11. ATP-binding positions include 11–12 and His19; that span reads SF. Substrate-binding residues include Lys43, Leu75, and Arg89. ATP contacts are provided by residues 90 to 92, Glu100, and 125 to 131; these read GLR and YSFISSS.

The protein belongs to the bacterial CoaD family. As to quaternary structure, homohexamer. The cofactor is Mg(2+).

The protein resides in the cytoplasm. The enzyme catalyses (R)-4'-phosphopantetheine + ATP + H(+) = 3'-dephospho-CoA + diphosphate. The protein operates within cofactor biosynthesis; coenzyme A biosynthesis; CoA from (R)-pantothenate: step 4/5. Reversibly transfers an adenylyl group from ATP to 4'-phosphopantetheine, yielding dephospho-CoA (dPCoA) and pyrophosphate. The chain is Phosphopantetheine adenylyltransferase from Staphylococcus aureus (strain Mu3 / ATCC 700698).